We begin with the raw amino-acid sequence, 1472 residues long: Type IV pilus biogenesis factor PilY1 homolog PD_1611 (1472 aa).

Ca(2+) is bound by residues aspartate 1170, aspartate 1172, aspartate 1174, leucine 1176, and aspartate 1178. The span at 1383–1397 shows a compositional bias: polar residues; it reads RGSRSSIGNSDTGAV. Residues 1383–1403 form a disordered region; it reads RGSRSSIGNSDTGAVSTGGDA.

Belongs to the PilY1 family.

Its subcellular location is the fimbrium. In terms of biological role, one of the three PilY1 homologs of X.fastidiosa, which are involved in bacterial twitching motility as component of the filamentous type IV pili (T4P). The twitching motility of this protein is enhanced by calcium, which may provide the bacterium an adaptive advantage in environments with high calcium concentrations. The polypeptide is Type IV pilus biogenesis factor PilY1 homolog PD_1611 (Xylella fastidiosa (strain Temecula1 / ATCC 700964)).